Here is a 116-residue protein sequence, read N- to C-terminus: Flagellar hook-basal body complex protein FliE (116 aa).

Belongs to the FliE family.

It is found in the bacterial flagellum basal body. This is Flagellar hook-basal body complex protein FliE from Rhizobium rhizogenes (strain K84 / ATCC BAA-868) (Agrobacterium radiobacter).